The primary structure comprises 314 residues: Methionyl-tRNA formyltransferase (314 aa).

111-114 (SLLP) contributes to the (6S)-5,6,7,8-tetrahydrofolate binding site.

The protein belongs to the Fmt family.

It catalyses the reaction L-methionyl-tRNA(fMet) + (6R)-10-formyltetrahydrofolate = N-formyl-L-methionyl-tRNA(fMet) + (6S)-5,6,7,8-tetrahydrofolate + H(+). Attaches a formyl group to the free amino group of methionyl-tRNA(fMet). The formyl group appears to play a dual role in the initiator identity of N-formylmethionyl-tRNA by promoting its recognition by IF2 and preventing the misappropriation of this tRNA by the elongation apparatus. This chain is Methionyl-tRNA formyltransferase, found in Coxiella burnetii (strain CbuG_Q212) (Coxiella burnetii (strain Q212)).